The following is a 233-amino-acid chain: 2,3,4,5-tetrahydropyridine-2,6-dicarboxylate N-acetyltransferase (233 aa).

It belongs to the transferase hexapeptide repeat family. DapH subfamily.

The enzyme catalyses (S)-2,3,4,5-tetrahydrodipicolinate + acetyl-CoA + H2O = L-2-acetamido-6-oxoheptanedioate + CoA. It participates in amino-acid biosynthesis; L-lysine biosynthesis via DAP pathway; LL-2,6-diaminopimelate from (S)-tetrahydrodipicolinate (acetylase route): step 1/3. In terms of biological role, catalyzes the transfer of an acetyl group from acetyl-CoA to tetrahydrodipicolinate. The sequence is that of 2,3,4,5-tetrahydropyridine-2,6-dicarboxylate N-acetyltransferase from Oenococcus oeni (strain ATCC BAA-331 / PSU-1).